Consider the following 392-residue polypeptide: Phosphoglycerate kinase (392 aa).

Substrate is bound by residues 21–23, R36, 59–62, R113, and R146; these read DFN and HLGR. ATP contacts are provided by residues K197, E319, and 345 to 348; that span reads GGDT.

It belongs to the phosphoglycerate kinase family. Monomer.

Its subcellular location is the cytoplasm. It catalyses the reaction (2R)-3-phosphoglycerate + ATP = (2R)-3-phospho-glyceroyl phosphate + ADP. It functions in the pathway carbohydrate degradation; glycolysis; pyruvate from D-glyceraldehyde 3-phosphate: step 2/5. This is Phosphoglycerate kinase from Francisella tularensis subsp. novicida (strain U112).